A 394-amino-acid chain; its full sequence is Elongation factor Tu (394 aa).

Positions 10-204 constitute a tr-type G domain; the sequence is LPHVNIGTIG…AVDEYIPTPT (195 aa). The segment at 19-26 is G1; it reads GHVDHGKT. 19–26 is a GTP binding site; it reads GHVDHGKT. Threonine 26 contributes to the Mg(2+) binding site. Positions 60–64 are G2; it reads GITIN. The interval 81–84 is G3; that stretch reads DCPG. Residues 81 to 85 and 136 to 139 contribute to the GTP site; these read DCPGH and NKCD. The segment at 136–139 is G4; sequence NKCD. The tract at residues 174 to 176 is G5; it reads SAL.

Belongs to the TRAFAC class translation factor GTPase superfamily. Classic translation factor GTPase family. EF-Tu/EF-1A subfamily. As to quaternary structure, monomer.

Its subcellular location is the cytoplasm. The catalysed reaction is GTP + H2O = GDP + phosphate + H(+). Functionally, GTP hydrolase that promotes the GTP-dependent binding of aminoacyl-tRNA to the A-site of ribosomes during protein biosynthesis. The protein is Elongation factor Tu of Mesoplasma florum (strain ATCC 33453 / NBRC 100688 / NCTC 11704 / L1) (Acholeplasma florum).